The chain runs to 264 residues: Ribonuclease HII (264 aa).

The RNase H type-2 domain maps to 33-224 (GPVAGVDEVG…VRRVASGSNT (192 aa)). Asp39, Glu40, and Asp133 together coordinate a divalent metal cation. The tract at residues 222 to 264 (SNTAEVADGQPDPRDGTAQTGEGRWSKSSHPATMRATGRAQGT) is disordered.

It belongs to the RNase HII family. Requires Mn(2+) as cofactor. The cofactor is Mg(2+).

It is found in the cytoplasm. It catalyses the reaction Endonucleolytic cleavage to 5'-phosphomonoester.. Its function is as follows. Endonuclease that specifically degrades the RNA of RNA-DNA hybrids. The sequence is that of Ribonuclease HII from Mycobacterium bovis (strain ATCC BAA-935 / AF2122/97).